Here is a 126-residue protein sequence, read N- to C-terminus: Aspartate 1-decarboxylase 2 (126 aa).

Serine 25 acts as the Schiff-base intermediate with substrate; via pyruvic acid in catalysis. Pyruvic acid (Ser) is present on serine 25. Residue threonine 57 coordinates substrate. Tyrosine 58 (proton donor) is an active-site residue. Residue 73-75 (GSA) participates in substrate binding.

Belongs to the PanD family. In terms of assembly, heterooctamer of four alpha and four beta subunits. Pyruvate serves as cofactor. Is synthesized initially as an inactive proenzyme, which is activated by self-cleavage at a specific serine bond to produce a beta-subunit with a hydroxyl group at its C-terminus and an alpha-subunit with a pyruvoyl group at its N-terminus.

It is found in the cytoplasm. It carries out the reaction L-aspartate + H(+) = beta-alanine + CO2. It participates in cofactor biosynthesis; (R)-pantothenate biosynthesis; beta-alanine from L-aspartate: step 1/1. Functionally, catalyzes the pyruvoyl-dependent decarboxylation of aspartate to produce beta-alanine. The polypeptide is Aspartate 1-decarboxylase 2 (Polaromonas sp. (strain JS666 / ATCC BAA-500)).